The following is a 432-amino-acid chain: C2H2 type master regulator of conidiophore development brlA (432 aa).

Disordered stretches follow at residues serine 22–glycine 72 and lysine 238–proline 260. Low complexity predominate over residues threonine 29 to serine 44. Polar residues-rich tracts occupy residues leucine 62–glycine 72 and lysine 238–glycine 252. 2 C2H2-type zinc fingers span residues phenylalanine 320–histidine 344 and histidine 350–histidine 375. Residues leucine 388–glutamate 432 form a disordered region.

The protein resides in the nucleus. Its function is as follows. BrlA, abaA and wetA are pivotal regulators of conidiophore development and conidium maturation. They act individually and together to regulate their own expression and that of numerous other sporulation-specific genes. Binds promoters of target genes at brlA response elements (BREs) containing the conserved sequence 5'-(C/A)(A/G)AGGG(G/A)-3'. Controls the expression of the conidiophore-specific phenol oxidase ivoB. Controls the expression of the hydrophobin rodA. Mediates the developmental switch from the indeterminate, apical growth pattern of vegetative cells to the budding growth pattern of conidiophores. Expression of brlA leads to activation of abaA, wetA and stuA, cessation of vegetative growth, cellular vacuolization and spore formation. The protein is C2H2 type master regulator of conidiophore development brlA of Emericella nidulans (strain FGSC A4 / ATCC 38163 / CBS 112.46 / NRRL 194 / M139) (Aspergillus nidulans).